Here is an 861-residue protein sequence, read N- to C-terminus: Leucine--tRNA ligase (861 aa).

The 'HIGH' region motif lies at 42-52 (PYPSGKLHMGH). The 'KMSKS' region signature appears at 619 to 623 (KMSKS). K622 is a binding site for ATP.

It belongs to the class-I aminoacyl-tRNA synthetase family.

The protein localises to the cytoplasm. The enzyme catalyses tRNA(Leu) + L-leucine + ATP = L-leucyl-tRNA(Leu) + AMP + diphosphate. This chain is Leucine--tRNA ligase, found in Actinobacillus pleuropneumoniae serotype 5b (strain L20).